The primary structure comprises 274 residues: 2,3,4,5-tetrahydropyridine-2,6-dicarboxylate N-succinyltransferase (274 aa).

The substrate site is built by Arg-104 and Asp-141.

Belongs to the transferase hexapeptide repeat family. In terms of assembly, homotrimer.

The protein resides in the cytoplasm. It catalyses the reaction (S)-2,3,4,5-tetrahydrodipicolinate + succinyl-CoA + H2O = (S)-2-succinylamino-6-oxoheptanedioate + CoA. Its pathway is amino-acid biosynthesis; L-lysine biosynthesis via DAP pathway; LL-2,6-diaminopimelate from (S)-tetrahydrodipicolinate (succinylase route): step 1/3. The chain is 2,3,4,5-tetrahydropyridine-2,6-dicarboxylate N-succinyltransferase from Escherichia coli O6:H1 (strain CFT073 / ATCC 700928 / UPEC).